Reading from the N-terminus, the 490-residue chain is Phosphoglucosamine mutase (490 aa).

Ser-139 (phosphoserine intermediate) is an active-site residue. 4 residues coordinate Mg(2+): Ser-139, Asp-279, Asp-281, and Asp-283. Ser-139 is modified (phosphoserine).

This sequence belongs to the phosphohexose mutase family. It depends on Mg(2+) as a cofactor. Activated by phosphorylation.

It carries out the reaction alpha-D-glucosamine 1-phosphate = D-glucosamine 6-phosphate. Its function is as follows. Catalyzes the conversion of glucosamine-6-phosphate to glucosamine-1-phosphate. In Nostoc punctiforme (strain ATCC 29133 / PCC 73102), this protein is Phosphoglucosamine mutase.